The chain runs to 124 residues: Large ribosomal subunit protein bL12 (124 aa).

The protein belongs to the bacterial ribosomal protein bL12 family. Homodimer. Part of the ribosomal stalk of the 50S ribosomal subunit. Forms a multimeric L10(L12)X complex, where L10 forms an elongated spine to which 2 to 4 L12 dimers bind in a sequential fashion. Binds GTP-bound translation factors.

Its function is as follows. Forms part of the ribosomal stalk which helps the ribosome interact with GTP-bound translation factors. Is thus essential for accurate translation. In Chlorobium chlorochromatii (strain CaD3), this protein is Large ribosomal subunit protein bL12.